The sequence spans 242 residues: Biosynthetic peptidoglycan transglycosylase (242 aa).

A helical transmembrane segment spans residues 19–39 (ILAALAVFWGGGIALFSVVPV).

The protein belongs to the glycosyltransferase 51 family.

It is found in the cell inner membrane. The catalysed reaction is [GlcNAc-(1-&gt;4)-Mur2Ac(oyl-L-Ala-gamma-D-Glu-L-Lys-D-Ala-D-Ala)](n)-di-trans,octa-cis-undecaprenyl diphosphate + beta-D-GlcNAc-(1-&gt;4)-Mur2Ac(oyl-L-Ala-gamma-D-Glu-L-Lys-D-Ala-D-Ala)-di-trans,octa-cis-undecaprenyl diphosphate = [GlcNAc-(1-&gt;4)-Mur2Ac(oyl-L-Ala-gamma-D-Glu-L-Lys-D-Ala-D-Ala)](n+1)-di-trans,octa-cis-undecaprenyl diphosphate + di-trans,octa-cis-undecaprenyl diphosphate + H(+). Its pathway is cell wall biogenesis; peptidoglycan biosynthesis. Its function is as follows. Peptidoglycan polymerase that catalyzes glycan chain elongation from lipid-linked precursors. In Salmonella schwarzengrund (strain CVM19633), this protein is Biosynthetic peptidoglycan transglycosylase.